The primary structure comprises 231 residues: Ion-translocating oxidoreductase complex subunit E (231 aa).

The next 6 helical transmembrane spans lie at 18 to 38 (ALVQ…ATNA), 39 to 59 (LGLG…ISTL), 63 to 83 (TPAE…VSAV), 86 to 106 (LINA…PLIV), 125 to 145 (ALSA…MFVL), and 182 to 202 (PFLL…MLAG).

Belongs to the NqrDE/RnfAE family. The complex is composed of six subunits: RsxA, RsxB, RsxC, RsxD, RsxE and RsxG.

It localises to the cell inner membrane. Functionally, part of a membrane-bound complex that couples electron transfer with translocation of ions across the membrane. Required to maintain the reduced state of SoxR. The protein is Ion-translocating oxidoreductase complex subunit E of Escherichia coli (strain ATCC 8739 / DSM 1576 / NBRC 3972 / NCIMB 8545 / WDCM 00012 / Crooks).